Here is a 644-residue protein sequence, read N- to C-terminus: Transmembrane 9 superfamily member 9 (644 aa).

The first 27 residues, 1–27, serve as a signal peptide directing secretion; that stretch reads MEFYRSSRRLQILGSVILLLSIHVAHS. Residues 28 to 281 lie on the Lumenal side of the membrane; it reads FYLPGVAPQD…YLLMSDNQIH (254 aa). A helical transmembrane segment spans residues 282–302; sequence WFSIVNSLMIVLFLSGMVAMI. The Cytoplasmic portion of the chain corresponds to 303 to 351; it reads MLRTLYRDISRYNELETQEEAQEETGWKLVHGDVFRPPANSDLLCVYVG. The helical transmembrane segment at 352–372 threads the bilayer; sequence TGVQCLGMVLVTMIFAMLGFL. Residues 373–377 are Lumenal-facing; the sequence is SPSNR. A helical transmembrane segment spans residues 378-398; that stretch reads GGLMTAMLLLWVFMGLFAGYA. Topologically, residues 399–418 are cytoplasmic; that stretch reads SSRLYKMFKGTEWKRIAFRT. The helical transmembrane segment at 419–439 threads the bilayer; the sequence is AFLFPAVVSAIFFVLNALIWG. Residues 440-451 lie on the Lumenal side of the membrane; sequence QKSSGAVPFGTM. Residues 452-472 form a helical membrane-spanning segment; sequence FALIFLWFGISVPLVFVGAYL. Topologically, residues 473 to 501 are cytoplasmic; the sequence is GFKKPPLDDPVKTNKIPRQIPEQAWYMNP. Residues 502-522 form a helical membrane-spanning segment; that stretch reads IFSILIGGILPFGAVFIELFF. The Lumenal segment spans residues 523–534; the sequence is ILTSIWLNQFYY. Residues 535–555 traverse the membrane as a helical segment; it reads IFGFLFLVFVILMVTCAEITI. The Cytoplasmic segment spans residues 556 to 573; the sequence is VLCYFQLCSEDYLWWWRS. Residues 574–594 traverse the membrane as a helical segment; it reads YLTSGSSAVYLFLYAAFYFFT. Residues 595-600 lie on the Lumenal side of the membrane; sequence KLQITK. A helical membrane pass occupies residues 601–621; that stretch reads LVSAMLYFGYMLIASYAFFVL. Topologically, residues 622 to 644 are cytoplasmic; sequence TGTIGFYACLWFTRLIYSSVKID. The Endoplasmic reticulum export signal signature appears at 633-638; that stretch reads FTRLIY. Residues 642 to 644 carry the Golgi retention signal motif; it reads KID.

This sequence belongs to the nonaspanin (TM9SF) (TC 9.A.2) family.

The protein localises to the endosome membrane. It is found in the golgi apparatus membrane. The sequence is that of Transmembrane 9 superfamily member 9 from Arabidopsis thaliana (Mouse-ear cress).